The sequence spans 342 residues: Anthranilate phosphoribosyltransferase (342 aa).

5-phospho-alpha-D-ribose 1-diphosphate-binding positions include G79, 82–83 (GD), T87, 89–92 (NIST), 107–115 (KHCNQRISS), and S119. G79 contacts anthranilate. S91 provides a ligand contact to Mg(2+). Residue N110 coordinates anthranilate. Anthranilate is bound at residue R165. Positions 223 and 224 each coordinate Mg(2+).

It belongs to the anthranilate phosphoribosyltransferase family. Homodimer. It depends on Mg(2+) as a cofactor.

It catalyses the reaction N-(5-phospho-beta-D-ribosyl)anthranilate + diphosphate = 5-phospho-alpha-D-ribose 1-diphosphate + anthranilate. Its pathway is amino-acid biosynthesis; L-tryptophan biosynthesis; L-tryptophan from chorismate: step 2/5. Functionally, catalyzes the transfer of the phosphoribosyl group of 5-phosphorylribose-1-pyrophosphate (PRPP) to anthranilate to yield N-(5'-phosphoribosyl)-anthranilate (PRA). The chain is Anthranilate phosphoribosyltransferase from Buchnera aphidicola subsp. Acyrthosiphon pisum (strain Tuc7).